Consider the following 388-residue polypeptide: S-adenosylmethionine synthase (388 aa).

His17 lines the ATP pocket. Mg(2+) is bound at residue Asp19. Glu45 provides a ligand contact to K(+). The L-methionine site is built by Glu58 and Gln102. The tract at residues 102–112 (QSVHIAQGVDA) is flexible loop. ATP-binding positions include 167-169 (DAK), Asp241, 247-248 (RK), Ala264, and Lys268. Asp241 is a binding site for L-methionine. Lys272 contacts L-methionine.

The protein belongs to the AdoMet synthase family. As to quaternary structure, homotetramer; dimer of dimers. Mg(2+) is required as a cofactor. Requires K(+) as cofactor.

The protein localises to the cytoplasm. It catalyses the reaction L-methionine + ATP + H2O = S-adenosyl-L-methionine + phosphate + diphosphate. It participates in amino-acid biosynthesis; S-adenosyl-L-methionine biosynthesis; S-adenosyl-L-methionine from L-methionine: step 1/1. Functionally, catalyzes the formation of S-adenosylmethionine (AdoMet) from methionine and ATP. The overall synthetic reaction is composed of two sequential steps, AdoMet formation and the subsequent tripolyphosphate hydrolysis which occurs prior to release of AdoMet from the enzyme. In Maricaulis maris (strain MCS10) (Caulobacter maris), this protein is S-adenosylmethionine synthase.